A 451-amino-acid polypeptide reads, in one-letter code: Phosphoglucosamine mutase (451 aa).

Serine 102 serves as the catalytic Phosphoserine intermediate. Serine 102, aspartate 243, aspartate 245, and aspartate 247 together coordinate Mg(2+). Serine 102 is modified (phosphoserine).

This sequence belongs to the phosphohexose mutase family. Mg(2+) is required as a cofactor. Post-translationally, activated by phosphorylation.

It carries out the reaction alpha-D-glucosamine 1-phosphate = D-glucosamine 6-phosphate. Functionally, catalyzes the conversion of glucosamine-6-phosphate to glucosamine-1-phosphate. This Chelativorans sp. (strain BNC1) protein is Phosphoglucosamine mutase.